A 496-amino-acid polypeptide reads, in one-letter code: MASRVNDQSQASRNGLKGKVLTLDTMNPCVRRVEYAVRGPIVQRALELEQELRQGVKKPFTEVIRANIGDAQAMGQRPITFFRQVLALCVYPNLLSSPDFPEDAKRRAERILQACGGHSLGAYSISSGIQPIREDVAQYIERRDGGIPADPNNIFLSTGASDAIVTMLKLLVSGEGRARTGVLIPIPQYPLYSAALAELDAVQVDYYLDEERAWALDIAELRRALCQARDRCCPRVLCVINPGNPTGQVQTRECIEAVIRFAFKEGLFLMADEVYQDNVYAEGSQFHSFKKVLMEMGPPYSTQQELASFHSVSKGYMGECGFRGGYVEVVNMDAEVQKQMGKLMSVRLCPPVPGQALMDMVVSPPTPSEPSFKQFQAERQEVLAELAAKAKLTEQVFNEAPGIRCNPVQGAMYSFPQVQLPLKAVQRAQELGLAPDMFFCLCLLEETGICVVPGSGFGQQEGTYHFRMTILPPMEKLRLLLEKLSHFHAKFTHEYS.

Position 2 is an N-acetylalanine (A2). T22 carries the post-translational modification Phosphothreonine. K314 carries the post-translational modification N6-(pyridoxal phosphate)lysine.

Belongs to the class-I pyridoxal-phosphate-dependent aminotransferase family. Alanine aminotransferase subfamily. As to quaternary structure, homodimer. Pyridoxal 5'-phosphate is required as a cofactor. In terms of tissue distribution, liver, heart, skeletal muscle, etc.

It localises to the cytoplasm. It catalyses the reaction L-alanine + 2-oxoglutarate = pyruvate + L-glutamate. It functions in the pathway amino-acid degradation; L-alanine degradation via transaminase pathway; pyruvate from L-alanine: step 1/1. In terms of biological role, catalyzes the reversible transamination between alanine and 2-oxoglutarate to form pyruvate and glutamate. Participates in cellular nitrogen metabolism and also in liver gluconeogenesis starting with precursors transported from skeletal muscles. The chain is Alanine aminotransferase 1 (Gpt) from Rattus norvegicus (Rat).